A 622-amino-acid chain; its full sequence is Peptidoglycan O-acetyltransferase OatA (622 aa).

The next 11 membrane-spanning stretches (helical) occupy residues 11-31, 39-59, 81-101, 143-163, 173-193, 212-232, 237-257, 267-287, 307-327, 334-354, and 387-407; these read YVPSIDGLRALAVIAVIAYHL, GFIGVDIFFVLSGYLITNILL, LIPAVYVMIVVVVIYSVFFHP, LWSLAIEEQFYLIWPAFLLVF, LLKIVIGLGLLSAVWMTILYV, LLSGCALAFVWPFNRLSPVVP, AVLNIAGTISILCFILFTAFV, GGLLFVAILGVIMIATISHPA, YGIYLWHYPIITLTTPVLEIT, AILQVAATFIIAELSFRFIET, and IAGVVAVLAIFTLGMSNVLSV. Residues 412 to 467 form a disordered region; that stretch reads EKQQTSVKTTTSTPDEKKDDKKEDKATKDKEADSNKASEQKETQKPDNKNKSAATP. Over residues 413–424 the composition is skewed to low complexity; sequence KQQTSVKTTTST. Positions 425 to 461 are enriched in basic and acidic residues; that stretch reads PDEKKDDKKEDKATKDKEADSNKASEQKETQKPDNKN. Active-site residues include serine 480, aspartate 600, and histidine 603.

The protein belongs to the acyltransferase 3 family.

The protein localises to the cell membrane. It localises to the secreted. Its subcellular location is the cell wall. Its function is as follows. Responsible for O-acetylation at the C6-hydroxyl group of N-acetylmuramyl residues, forming the corresponding N,6-O-diacetylmuramic acid of the peptidoglycan. O-acetylation of the peptidoglycan is the major determinant for lysozyme resistance. Critical for virulence and escape from innate immune response of the host. Involved at both early and later stages of listeriosis in the mouse model of infection. Required for successful host colonization and for intracellular survival of bacteria in macrophages of the infected host. Controls the production of inflammatory mediators in the liver of the infected host. Confers resistance to host antimicrobial molecules and to cell wall-targeting molecules such as beta-lactam antibiotics and bacteriocins. The protein is Peptidoglycan O-acetyltransferase OatA of Listeria monocytogenes serovar 1/2a (strain ATCC BAA-679 / EGD-e).